Reading from the N-terminus, the 226-residue chain is CASP-like protein 2BC1 (226 aa).

Over 1–37 (MRKHIDIVFSRLSGPILNPPPDNNVIPKTDRKLRITE) the chain is Cytoplasmic. The chain crosses the membrane as a helical span at residues 38 to 58 (VILRFAVVIFALVSAIMVGTA). The Extracellular portion of the chain corresponds to 59-78 (SGTRDLGGGIRIHAHFTLLK). A helical membrane pass occupies residues 79–99 (TLPFLVIVDGILAVYSLLQGL). The Cytoplasmic segment spans residues 100–114 (RCFLSLYMRHILLNK). The helical transmembrane segment at 115 to 135 (ALAWTIFCCDQALAYVIFAAA) threads the bilayer. Topologically, residues 136-170 (ASTAETAYISEQGLDELQWIKVCMFFRAYCFKSGA) are extracellular. A helical membrane pass occupies residues 171-191 (GMINAFLAALCMVFVSGMSVF). The Cytoplasmic segment spans residues 192 to 226 (HLFRLYGEKRAYGHIAEQVVISEEAAERRNSLNGI).

The protein belongs to the Casparian strip membrane proteins (CASP) family. Homodimer and heterodimers.

The protein resides in the cell membrane. This chain is CASP-like protein 2BC1, found in Picea sitchensis (Sitka spruce).